The sequence spans 347 residues: Endo-1,4-beta-xylanase 3 (347 aa).

Positions 1 to 16 (MKANVILCLLAPLVAA) are cleaved as a signal peptide. Residues 17 to 45 (LPTETIHLDPELAALRANLTERTADLWDR) constitute a propeptide that is removed on maturation. Gln-46 bears the Pyrrolidone carboxylic acid mark. The GH10 domain maps to 46-345 (QASQSIDQLI…KPAYNSIVGI (300 aa)). Catalysis depends on Glu-176, which acts as the Proton donor. Glu-282 acts as the Nucleophile in catalysis. A disulfide bridge connects residues Cys-300 and Cys-306.

Belongs to the glycosyl hydrolase 10 (cellulase F) family. As to quaternary structure, monomer. Not glycosylated.

The protein localises to the secreted. It carries out the reaction Endohydrolysis of (1-&gt;4)-beta-D-xylosidic linkages in xylans.. Its pathway is glycan degradation; xylan degradation. In terms of biological role, glycoside hydrolase involved in the hydrolysis of xylan, a major plant cell wall hemicellulose made up of 1,4-beta-linked D-xylopyranose residues. Catalyzes the endohydrolysis of the main-chain 1,4-beta-glycosidic bonds connecting the xylose subunits yielding various xylooligosaccharides and xylose. Produces xylobiose and xylotriose as the main degradation products. The polypeptide is Endo-1,4-beta-xylanase 3 (xyn3) (Hypocrea jecorina (strain QM6a) (Trichoderma reesei)).